The primary structure comprises 165 residues: Putative 1,2-phenylacetyl-CoA epoxidase, subunit D (165 aa).

Monomer.

The protein operates within aromatic compound metabolism; phenylacetate degradation. In terms of biological role, possible component of 1,2-phenylacetyl-CoA epoxidase multicomponent enzyme system which catalyzes the reduction of phenylacetyl-CoA (PA-CoA) to form 1,2-epoxyphenylacetyl-CoA. The subunit D may have a function related to the maturation of the monooxygenase complex, rather than direct involvement in catalysis. PaaD could assist either in maturation of PaaE or PaaA. This chain is Putative 1,2-phenylacetyl-CoA epoxidase, subunit D (paaD), found in Escherichia coli (strain K12).